A 643-amino-acid chain; its full sequence is NADH-ubiquinone oxidoreductase chain 5 (643 aa).

Helical transmembrane passes span 7–27 (IIILTINISIIITLLSSVFFF), 64–84 (LLKTLAILSLFPLFIEIIFNI), 114–134 (TFLSVALIVSWSILEFSYYYM), 140–160 (PNNFFRLLIIFLLNMIILTST), 163–183 (IFLLFIGWEGVGFLSFLLISW), 208–228 (ILLFFSLSITLFNTWSLPEIF), 230–250 (ISAPNTFNNLLLVGLLIAAAG), 277–297 (SSTMVVAGIFLLIRLSPLYAC), 301–321 (FNTWCLILGSITAIFAATTAI), 338–358 (LGLMMVAIGLNQPSIALFHIC), 398–418 (AACIILGSLALSGIPFLPGFY), 437–457 (IVLSLLATLLTSVYSFRIIFF), 486–506 (ALGTILSGWILTNLTVLVPII), 511–531 (VLKTAALLLTITGVLFSISIL), 555–575 (FYENISHILFLFYSFTISLSL), and 615–635 (YLLFSFLTLLIIIALSLTTIS).

It belongs to the complex I subunit 5 family.

Its subcellular location is the mitochondrion inner membrane. It catalyses the reaction a ubiquinone + NADH + 5 H(+)(in) = a ubiquinol + NAD(+) + 4 H(+)(out). Core subunit of the mitochondrial membrane respiratory chain NADH dehydrogenase (Complex I) that is believed to belong to the minimal assembly required for catalysis. Complex I functions in the transfer of electrons from NADH to the respiratory chain. The immediate electron acceptor for the enzyme is believed to be ubiquinone. This chain is NADH-ubiquinone oxidoreductase chain 5 (ND5), found in Patiria pectinifera (Starfish).